We begin with the raw amino-acid sequence, 445 residues long: tRNA-2-methylthio-N(6)-dimethylallyladenosine synthase (445 aa).

Positions 3-124 (KKLYIKTYGC…LPELISKVVR (122 aa)) constitute an MTTase N-terminal domain. Residues C12, C48, C87, C162, C166, and C169 each coordinate [4Fe-4S] cluster. The 233-residue stretch at 148-380 (YPQGASSFIS…QQELTAQQLA (233 aa)) folds into the Radical SAM core domain. The TRAM domain occupies 383–445 (ESCVGSIMKV…ASNSLTGEVI (63 aa)).

Belongs to the methylthiotransferase family. MiaB subfamily. As to quaternary structure, monomer. The cofactor is [4Fe-4S] cluster.

It localises to the cytoplasm. The enzyme catalyses N(6)-dimethylallyladenosine(37) in tRNA + (sulfur carrier)-SH + AH2 + 2 S-adenosyl-L-methionine = 2-methylsulfanyl-N(6)-dimethylallyladenosine(37) in tRNA + (sulfur carrier)-H + 5'-deoxyadenosine + L-methionine + A + S-adenosyl-L-homocysteine + 2 H(+). Functionally, catalyzes the methylthiolation of N6-(dimethylallyl)adenosine (i(6)A), leading to the formation of 2-methylthio-N6-(dimethylallyl)adenosine (ms(2)i(6)A) at position 37 in tRNAs that read codons beginning with uridine. The polypeptide is tRNA-2-methylthio-N(6)-dimethylallyladenosine synthase (Rickettsia felis (strain ATCC VR-1525 / URRWXCal2) (Rickettsia azadi)).